The following is a 702-amino-acid chain: Ribosomal RNA large subunit methyltransferase K/L (702 aa).

The THUMP domain occupies 43-154 (LIYQSLMWSR…KETAHISLDL (112 aa)).

The protein belongs to the methyltransferase superfamily. RlmKL family.

Its subcellular location is the cytoplasm. The enzyme catalyses guanosine(2445) in 23S rRNA + S-adenosyl-L-methionine = N(2)-methylguanosine(2445) in 23S rRNA + S-adenosyl-L-homocysteine + H(+). It catalyses the reaction guanosine(2069) in 23S rRNA + S-adenosyl-L-methionine = N(2)-methylguanosine(2069) in 23S rRNA + S-adenosyl-L-homocysteine + H(+). Functionally, specifically methylates the guanine in position 2445 (m2G2445) and the guanine in position 2069 (m7G2069) of 23S rRNA. The sequence is that of Ribosomal RNA large subunit methyltransferase K/L from Enterobacter sp. (strain 638).